A 149-amino-acid polypeptide reads, in one-letter code: MASSDIQVKELEKRASGQAFELILSPRSKESVPDFPLSPPKKKDLSLEEIQKKLEAAEERRKSHEAEVLKQLAEKREHEKEVLQKAIEENNNFSKMAEEKLTHKMEANKENREAQMAAKLERLREKDKHVEEVRKNKESKDPADETEAD.

At Ala2 the chain carries N-acetylalanine. The residue at position 4 (Ser4) is a Phosphoserine. Positions 4 to 145 (SDIQVKELEK…NKESKDPADE (142 aa)) constitute an SLD domain. Position 9 is an N6-acetyllysine (Lys9). Residue Ser16 is modified to Phosphoserine; by PKA. Ser25 is subject to Phosphoserine; by CDK1, MAPK1 and MAPK3. The tract at residues 27–46 (RSKESVPDFPLSPPKKKDLS) is disordered. Residue Lys29 is modified to N6-methyllysine. Ser31 carries the post-translational modification Phosphoserine. Ser38 is modified (phosphoserine; by CDK1, MAPK1 and MAPK3). A coiled-coil region spans residues 41-140 (KKKDLSLEEI…EEVRKNKESK (100 aa)). Ser63 is subject to Phosphoserine; by PKA. An N6-acetyllysine mark is found at Lys100 and Lys119. The segment covering 104 to 143 (KMEANKENREAQMAAKLERLREKDKHVEEVRKNKESKDPA) has biased composition (basic and acidic residues). A disordered region spans residues 104-149 (KMEANKENREAQMAAKLERLREKDKHVEEVRKNKESKDPADETEAD).

The protein belongs to the stathmin family. In terms of assembly, binds to two alpha/beta-tubulin heterodimers. Interacts with KIST. Many different phosphorylated forms are observed depending on specific combinations among the sites which can be phosphorylated. MAPK is responsible for the phosphorylation of stathmin in response to NGF. Phosphorylation at Ser-16 seems to be required for neuron polarization. In terms of tissue distribution, highly expressed in the lateral nucleus of the amygdala.

The protein resides in the cytoplasm. The protein localises to the cytoskeleton. Its function is as follows. Involved in the regulation of the microtubule (MT) filament system by destabilizing microtubules. Prevents assembly and promotes disassembly of microtubules. Phosphorylation at Ser-16 may be required for axon formation during neurogenesis. Involved in the control of the learned and innate fear. In Mus musculus (Mouse), this protein is Stathmin (Stmn1).